The primary structure comprises 139 residues: MNRFIIFMFVVVTYFGLNVAFDMFPCPKNKVLIRNELGPGLVLQYHCHSRDHNLDVANLQFNEYKEIAFGDKLGKRTRWSCILKHGLYMRYYSEFIAYMMANVRRCGAIRNWIARKDRIYLIRNVNPPAVFRYTWNKTK.

The first 20 residues, 1–20 (MNRFIIFMFVVVTYFGLNVA), serve as a signal peptide directing secretion. Asn-136 is a glycosylation site (N-linked (GlcNAc...) asparagine).

Belongs to the plant self-incompatibility (S1) protein family.

It localises to the secreted. In Arabidopsis thaliana (Mouse-ear cress), this protein is S-protein homolog 14.